The sequence spans 865 residues: Leucine--tRNA ligase (865 aa).

The 'HIGH' region signature appears at 36–46; sequence PYPSGKIHMGH. Positions 608–612 match the 'KMSKS' region motif; it reads KMSKS. Position 611 (lysine 611) interacts with ATP.

Belongs to the class-I aminoacyl-tRNA synthetase family.

It is found in the cytoplasm. It carries out the reaction tRNA(Leu) + L-leucine + ATP = L-leucyl-tRNA(Leu) + AMP + diphosphate. The sequence is that of Leucine--tRNA ligase from Wolbachia sp. subsp. Brugia malayi (strain TRS).